Here is a 471-residue protein sequence, read N- to C-terminus: Pneumolysin (471 aa).

4 beta stranded membrane-spanning segments follow: residues 158–171 (MEQLKVKFGSDFEK), 178–187 (IDFNSVHSGE), 256–265 (SDEVEAAFEA), and 273–285 (APQTEWKQILDNT). Residues 427–437 (ECTGLAWEWWR) carry the Conserved undecapeptide motif. The Cholesterol binding signature appears at 459–460 (TL).

It belongs to the cholesterol-dependent cytolysin family. In terms of assembly, homooligomeric pore complex of 35 to 50 subunits; when inserted in the host membrane. In terms of processing, has a slightly altered apparent molecular weight in a secA2 deletion mutant, but no post-translational modifications have been found.

It localises to the secreted. It is found in the cell wall. The protein resides in the host cell membrane. A cholesterol-dependent toxin that causes cytolysis by forming pores in cholesterol containing host membranes. After binding to target membranes, the protein undergoes a major conformation change, leading to its insertion in the host membrane and formation of an oligomeric pore complex. Cholesterol is required for binding to host membranes, membrane insertion and pore formation; cholesterol binding is mediated by a Thr-Leu pair in the C-terminus. Can be reversibly inactivated by oxidation. This is Pneumolysin (ply) from Streptococcus pneumoniae serotype 4 (strain ATCC BAA-334 / TIGR4).